A 2120-amino-acid polypeptide reads, in one-letter code: MNTRSLLSAWAALLVVTVRHRAHAMASLYPFWPNDTKTPKVDDGSSSEIKLSVPFIFFRSPYRTVYVNNNGVISFNSLVSQFTPEAFPLADGRAFVAPFCGDVANGIRGEIYYRESTNPELLGESSKDIRKYFKDMASFSASWVFIVTWEEVQFYGGSSTTPVNTFQAVLITDGVSSFAIFNYQEISWTTGTASGGDPLTGLGGVMAQAGFNGGNISNFFSIPGSRTPDIVNIEQTTNVNIPGRWAFKIDGREIDPANLSLRGQFLHQGEIFWENSNCSTKCRCLDFNNEIFCQEMLAPFETVEPKIKFFQCVPVETACVVFGDPHYHTFDGFLFHFQGSCSYLLARQCWPGSQLPYFNVEAKNERGGSSVSWAEDIFVEVYRHKIVLPKGGFGKAKVDDLVVSLGAIKVYQSGLSTALETDFGLLVTYDGQHYASVSVPGTYINGTCGLCGNYNKDPEDDALRSDGRLASSVPELGESWRVPHPERKCSPGCVENCSVCDASRILYSPICGFSQECGAWSVLVATAFVHSCVYDLCSARRTHRLCQAIQVTLRCCQGLGIRWENGVPDGMRGGLAVPGHSHYSGCASGCPATCSDLTAPLRCTAPCPEGCECDDGHVLSARPLHSLCRSGCVVDGRSRCREVFWATADCTAECQCEDGGEAKCFNTSCPEGEVCTIEDGYRGCYPKREGLCSVGQNQVLRTFDGVTFPYPLEHSYTLLKTCMEKPDFIEVDISQKKPDTLPMAGRVVRIQVVGQEVKVGGASLSEVKVNGYDVDLPYFHPSGHLEIYRTDNGTVTESEGLLSIGYYDSGLLEIRLSTAYFNCTGGLCGFFNGNDSDEFCTPKAKCTDNLELFLESWTTFDEICNGECGDLLKACNNDSELLKTYRSRSNCAIINDPTNSSFLECHNVSIVSAYYRTCLFRLCQSGGNQSELCSAVARYASACKNSEVDVGQWRSHSFCPLACPENSHFEECMSCVETCETLATGCCMDTCTEGCQCDEGFALRSPCVPRGECGCNFEGHELATNQTFWMDISCHLLCYCNGSDNSVYCENVLQDDEYYCHVRTDASCIVSGYGHYLTFDGFSFDFQSSCALVLCTTIHGACERSDTFPTFTVTVTAKNEDRDTSLACVVKQVEVEVFNYYIVIHRAYKYTVMINNERLYLPLKLGQGKVNIFAFGFHIVVETDFGLKVVYDWKTFLSVTIPRSFQNLTYGLCGRYNGNPDDDLVAAGGTPRFGVTDFVQSWAKRDTFCRVGSGDRCPACGKVEGFWKPQQLCSLIPSQSGVFAKCHSKINPSYFYKNCLFDTVVDGGAMARRVADWLQNYASTCQTQGIAIIGWRNFTSCSVSCPPNSHYESCVSLCQPRCAAIRLKSDCGHYCVEGCQCDPGYVLNGKSCILPQNCGCYSDGKYYEPKQLFWNGDCTRRCARFRRNLIQCDPRHCKSDEECASRNGVRGCFSTRSSFCLAAGGGVFRTFDGAFLRFPANCAFVLSTICQRLADFSFQLIINFDKWSSPNLTIISVYIYINEEQILISDRSTVKVNGSLVSIPFVTGLSTKIYSQEGFLVIDSGPDIHIRYNGFNVIKITIGDRLQNKVCGLCGNFNGDPADDYATLRGKPVVSSVVLAQSWKTNGMQKSCNELQYSQYAASCDNVQIQKLQSDSYCLKLTDMKGFFQPCYGLLDPLPFYESCFLDGCYNRKQVQLCGSLAAYGEACRTFGILGTEWIEKENCSGVVEDPCAGADCPNRTCELDDGGELCGCIEPPPYGNTTHDIIDAEVTCKAAQMEVSISKCKLFQLGFEREGVRVNDRHCPGIEGEDFISFQINNTKGNCGNLVQSNSTHIVYKNTVWIESANNTGNIITRDRTINVEVFCAYELDIKISLDSVVRPMLSVINLTVPTQEGSFTTKMALYKNSSYKHPYRQGEVVLTTRDVLYVGVFVVGADSNHLILMLNKCYATPSRDSNDKLRYFIIEGGCQNLKDNTIGIEENGVSLTCRFHVTVFKFIGDYDEVHLHCAVSLCDSEKYSCKINCPQHRRSASAFAQEAHEQILSVGPIRRKRSDWCEDNGGCEQICTSQADGPLCSCVTGTLQGDGKSCMASSSSADIRAQASLLVAAQLWLWAALHDPTS.

Residues 1 to 24 form the signal peptide; sequence MNTRSLLSAWAALLVVTVRHRAHA. N-linked (GlcNAc...) asparagine glycans are attached at residues Asn34, Asn215, Asn258, Asn277, Asn445, and Asn496. Residues 98–252 form the NIDO domain; that stretch reads PFCGDVANGI…GRWAFKIDGR (155 aa). Residues 260–312 form the VWFC domain; it reads SLRGQFLHQGEIFWENSNCSTKCRCLDFNNEIFCQEMLAPFETVEPKIKFFQC. The VWFD 1 domain maps to 317–490; that stretch reads TACVVFGDPH…RVPHPERKCS (174 aa). Intrachain disulfides connect Cys319–Cys451 and Cys341–Cys489. The TIL 1 domain maps to 578-620; the sequence is PGHSHYSGCASGCPATCSDLTAPLRCTAPCPEGCECDDGHVLS. N-linked (GlcNAc...) asparagine glycosylation is found at Asn666, Asn792, Asn822, Asn834, Asn877, Asn899, Asn907, and Asn928. A VWFD 2 domain is found at 690–865; the sequence is GLCSVGQNQV…SWTTFDEICN (176 aa). The cysteines at positions 692 and 828 are disulfide-linked. The region spanning 963–1013 is the TIL 2 domain; the sequence is CPENSHFEECMSCVETCETLATGCCMDTCTEGCQCDEGFALRSPCVPRGEC. Residues Asn1025, Asn1041, Asn1207, and Asn1337 are each glycosylated (N-linked (GlcNAc...) asparagine). A VWFD 3 domain is found at 1066-1250; the sequence is ASCIVSGYGH…SWAKRDTFCR (185 aa). Intrachain disulfides connect Cys1068-Cys1213 and Cys1090-Cys1249. A TIL 3 domain is found at 1345 to 1398; that stretch reads CPPNSHYESCVSLCQPRCAAIRLKSDCGHYCVEGCQCDPGYVLNGKSCILPQNC. The VWFD 4 domain maps to 1458–1633; that stretch reads SFCLAAGGGV…KTNGMQKSCN (176 aa). 7 disulfides stabilise this stretch: Cys1460–Cys1594, Cys1482–Cys1632, Cys1684–Cys1742, Cys1708–Cys1751, Cys1753–Cys1785, Cys1773–Cys1865, and Cys1804–Cys1824. N-linked (GlcNAc...) asparagine glycans are attached at residues Asn1511, Asn1537, Asn1723, Asn1739, Asn1761, Asn1818, Asn1831, Asn1847, Asn1887, and Asn1906. In terms of domain architecture, ZP spans 1772–2026; it reads TCKAAQMEVS…YSCKINCPQH (255 aa). Intrachain disulfides connect Cys1947–Cys2007, Cys1968–Cys2023, and Cys2012–Cys2019. Asn2058 carries the GPI-anchor amidated asparagine lipid modification. A propeptide spans 2059–2120 (removed in mature form); it reads GGCEQICTSQ…LWAALHDPTS (62 aa).

May form homomeric filament after self-association or heteromeric filament after association with beta-tectorin. In terms of processing, at least 3 products of tectorin seem to exist: HMM, MMM and LMM. They may be generated by active processing or the result of proteolysis occurring between intrachain disulfide bonds. Post-translationally, the presence of a hydrophobic C-terminus preceded by a potential cleavage site strongly suggests that tectorins are synthesized as glycosylphosphatidylinositol-linked, membrane-bound precursors. Tectorins are targeted to the apical surface of the inner ear epithelia by the lipid and proteolytically released into the extracellular compartment. In terms of tissue distribution, expressed in the inner ear.

Its subcellular location is the cell membrane. It localises to the secreted. It is found in the extracellular space. The protein resides in the extracellular matrix. Its function is as follows. One of the major non-collagenous components of the tectorial membrane. The tectorial membrane is an extracellular matrix of the inner ear that covers the neuroepithelium of the cochlea and contacts the stereocilia bundles of specialized sensory hair cells. Sound induces movement of these hair cells relative to the tectorial membrane, deflects the stereocilia and leads to fluctuations in hair-cell membrane potential, transducing sound into electrical signals. This is Alpha-tectorin (TECTA) from Gallus gallus (Chicken).